The chain runs to 506 residues: MVSSTTPSSGEYLLEMSGINKSFPGVKALDNVNLKVRPHSIHALMGENGAGKSTLLKCLFGIYQKDSGTILFQGKEIDFHSAKEALENGISMVHQELNLVLQRSVMDNMWLRRYPTKGMFVDQDKMYRETKAIFDELDIDIDPRARVGTLSVSQMQMIEIAKAFSYNAKIVIMDEPTSSLTEKEVNHLFTIIRKLKERGCGIVYISHKMEEIFQLCDEVTVLRDGQWIATEPLAGLTMDKIIAMMVGRSLNQRFPDKENKPGEVILEVRNLTSLRQPSIRDVSFDLHKGEILGIAGLVGAKRTDIVETLFGIREKSAGTITLHGKQINNHNANEAINHGFALVTEERRSTGIYAYLDIGFNSLISNIRNYKNKVGLLDKSRMKSDTQWVIDSMRVKTPGHRTQIGSLSGGNQQKVIIGRWLLTQPEILMLDEPTRGIDVGAKFEIYQLIAELAKKGKGIIIISSEMPELLGITDRILVMSNGLVSGIVDTKTTTQNEILRLASLHL.

2 consecutive ABC transporter domains span residues 14–249 and 264–506; these read LEMS…VGRS and VILE…SLHL. 46 to 53 lines the ATP pocket; that stretch reads GENGAGKS.

This sequence belongs to the ABC transporter superfamily. Galactose/methyl galactoside importer (TC 3.A.1.2.3) family. In terms of assembly, the complex is composed of one ATP-binding protein (MglA), two transmembrane proteins (MglC) and a solute-binding protein (MglB).

Its subcellular location is the cell inner membrane. It catalyses the reaction D-galactose(out) + ATP + H2O = D-galactose(in) + ADP + phosphate + H(+). It carries out the reaction methyl beta-D-galactoside(out) + ATP + H2O = methyl beta-D-galactoside(in) + ADP + phosphate + H(+). Part of the ABC transporter complex MglABC involved in galactose/methyl galactoside import. Responsible for energy coupling to the transport system. The chain is Galactose/methyl galactoside import ATP-binding protein MglA from Shigella boydii serotype 4 (strain Sb227).